The primary structure comprises 554 residues: Glutamine--tRNA ligase (554 aa).

A 'HIGH' region motif is present at residues 34–44 (PEPNGYLHIGH). Residues 35–37 (EPN) and 41–47 (HIGHAKS) each bind ATP. Residues D67 and Y212 each contribute to the L-glutamine site. ATP contacts are provided by residues T231, 261–262 (RL), and 269–271 (MSK). The 'KMSKS' region signature appears at 268–272 (VMSKR). The segment at 317 to 324 (TKQDNTIE) is interaction with tRNA.

This sequence belongs to the class-I aminoacyl-tRNA synthetase family. Monomer.

Its subcellular location is the cytoplasm. It carries out the reaction tRNA(Gln) + L-glutamine + ATP = L-glutaminyl-tRNA(Gln) + AMP + diphosphate. In Escherichia coli O157:H7, this protein is Glutamine--tRNA ligase.